Here is a 280-residue protein sequence, read N- to C-terminus: 4-diphosphocytidyl-2-C-methyl-D-erythritol kinase (280 aa).

Residue K8 is part of the active site. 91–101 (PIEAGLAGGSS) is an ATP binding site. The active site involves D133.

The protein belongs to the GHMP kinase family. IspE subfamily.

It carries out the reaction 4-CDP-2-C-methyl-D-erythritol + ATP = 4-CDP-2-C-methyl-D-erythritol 2-phosphate + ADP + H(+). It functions in the pathway isoprenoid biosynthesis; isopentenyl diphosphate biosynthesis via DXP pathway; isopentenyl diphosphate from 1-deoxy-D-xylulose 5-phosphate: step 3/6. In terms of biological role, catalyzes the phosphorylation of the position 2 hydroxy group of 4-diphosphocytidyl-2C-methyl-D-erythritol. The chain is 4-diphosphocytidyl-2-C-methyl-D-erythritol kinase from Clostridium tetani (strain Massachusetts / E88).